The primary structure comprises 260 residues: (+)-borneol dehydrogenase 1 (260 aa).

NAD(+) is bound by residues 20 to 26 (GGASGIG), Asp-44, 67 to 68 (DV), and 94 to 96 (NAG). Residue Ser-148 is the Proton donor of the active site. Tyr-161, Lys-165, and Thr-196 together coordinate NAD(+). The Proton acceptor role is filled by Tyr-161. Residue Lys-165 is the Proton donor/acceptor of the active site.

It belongs to the short-chain dehydrogenases/reductases (SDR) family.

The enzyme catalyses (1R,2S,4R)-borneol + NAD(+) = (1R,4R)-camphor + NADH + H(+). Functionally, involved in the biosynthesis of monoterpene natural products related to camphor. Catalayzes the oxidation of (+)-borneol to (+)-camphor. Shows absolute selectivity towards (+)-borneol. Catalyzes the oxidation of (+)-isoborneol to (-)-camphor. Shows absolute selectivity towards (+)-isoborneol. The chain is (+)-borneol dehydrogenase 1 from Salvia officinalis (Sage).